A 207-amino-acid polypeptide reads, in one-letter code: MFFVTPAYAEEAPAAATGTDAHAAPAAGEVHTETGVAEGEHARGPFPPFDSTTYASQLLWLVITFSVFYLLMQKVIAPRIGAILDQRHTRISQDLEEAGRLKAEADAAVQTYEGELAAARAKSNAIGSAARDAAKAKAEEDRRAVEASLSEKIKAAEVRIADIKAKAFADVGTIAEETAAAVVEQLIGGTAAQADVAAAVAAAKKEA.

Residues 53–72 (TYASQLLWLVITFSVFYLLM) form a helical membrane-spanning segment.

Belongs to the ATPase B chain family. As to quaternary structure, F-type ATPases have 2 components, F(1) - the catalytic core - and F(0) - the membrane proton channel. F(1) has five subunits: alpha(3), beta(3), gamma(1), delta(1), epsilon(1). F(0) has three main subunits: a(1), b(2) and c(10-14). The alpha and beta chains form an alternating ring which encloses part of the gamma chain. F(1) is attached to F(0) by a central stalk formed by the gamma and epsilon chains, while a peripheral stalk is formed by the delta and b chains.

It localises to the cell inner membrane. F(1)F(0) ATP synthase produces ATP from ADP in the presence of a proton or sodium gradient. F-type ATPases consist of two structural domains, F(1) containing the extramembraneous catalytic core and F(0) containing the membrane proton channel, linked together by a central stalk and a peripheral stalk. During catalysis, ATP synthesis in the catalytic domain of F(1) is coupled via a rotary mechanism of the central stalk subunits to proton translocation. In terms of biological role, component of the F(0) channel, it forms part of the peripheral stalk, linking F(1) to F(0). The b'-subunit is a diverged and duplicated form of b found in plants and photosynthetic bacteria. The protein is ATP synthase subunit b 2 (atpF2) of Rhizobium etli (strain CIAT 652).